The sequence spans 1176 residues: Leucine--tRNA ligase, cytoplasmic (1176 aa).

L-leucine-binding residues include Tyr-52 and Tyr-54. The short motif at 60–63 (HLGH) is the 'HIGH' region element. Ser-167 is modified (phosphoserine). The editing domain stretch occupies residues 260 to 509 (GPQEYTLLKL…DAGDALIYME (250 aa)). 2 residues coordinate L-leucine: Leu-594 and Ser-597. The 'KMSKS' region motif lies at 716–720 (KMSKS). Residue Lys-719 participates in ATP binding. Ser-720 carries the post-translational modification Phosphoserine. Residues Lys-970 and Lys-1047 each carry the N6-acetyllysine modification.

Belongs to the class-I aminoacyl-tRNA synthetase family. In terms of assembly, part of the aminoacyl-tRNA synthetase multienzyme complex, also known as multisynthetase complex (MSC), that is composed of the aminoacyl-tRNA ligases for Arg (RARS1), Asp (DARS1), Gln (QARS1), Ile (IARS1), Leu (LARS1), Lys (KARS1), Met (MARS1) the bifunctional ligase for Glu and Pro (EPRS1) and the auxiliary subunits AIMP1/p43, AIMP2/p38 and EEF1E1/p18.

It localises to the cytoplasm. The enzyme catalyses tRNA(Leu) + L-leucine + ATP = L-leucyl-tRNA(Leu) + AMP + diphosphate. It catalyses the reaction L-methionyl-tRNA(Leu) + H2O = tRNA(Leu) + L-methionine + H(+). With respect to regulation, 5-fluoro-1,3-dihydro-1-hydroxy-1,2-benzoxaborole inhibits LARS1 by forming a covalent adduct with the 3' adenosine of tRNA(Leu) at the editing site, thus locking the enzyme in an inactive conformation. Its function is as follows. Aminoacyl-tRNA synthetase that catalyzes the specific attachment of leucine to its cognate tRNA (tRNA(Leu)). It performs tRNA aminoacylation in a two-step reaction: Leu is initially activated by ATP to form a leucyl-adenylate (Leu-AMP) intermediate; then the leucyl moiety is transferred to the acceptor 3' end of the tRNA to yield leucyl-tRNA. To improve the fidelity of catalytic reactions, it is also able to hydrolyze misactivated aminoacyl-adenylate intermediates (pre-transfer editing) and mischarged aminoacyl-tRNAs (post-transfer editing). The protein is Leucine--tRNA ligase, cytoplasmic of Homo sapiens (Human).